The sequence spans 336 residues: tRNA (guanine(10)-N2)-dimethyltransferase (336 aa).

Residues 50 to 147 (KILKKRLAYA…NDRFILTRRL (98 aa)) form the THUMP domain.

This sequence belongs to the methyltransferase superfamily. Trm-G10 family. In terms of assembly, monomer.

The protein localises to the cytoplasm. It carries out the reaction guanosine(10) in tRNA + 2 S-adenosyl-L-methionine = N(2)-dimethylguanosine(10) in tRNA + 2 S-adenosyl-L-homocysteine + 2 H(+). Functionally, catalyzes the adenosylmethionine-dependent methylation of the exocyclic amino group (N(2)) of guanosine at position 10 of various tRNAs. Acts via a two-step process that leads to the formation of either N(2)-monomethyl (m(2)G) or N(2)-dimethylguanosine (m(2)(2)G). In Methanothermobacter thermautotrophicus (strain ATCC 29096 / DSM 1053 / JCM 10044 / NBRC 100330 / Delta H) (Methanobacterium thermoautotrophicum), this protein is tRNA (guanine(10)-N2)-dimethyltransferase (trmG10).